The sequence spans 276 residues: Glutamate racemase (276 aa).

Residues 10 to 11 and 42 to 43 contribute to the substrate site; these read DS and YG. The Proton donor/acceptor role is filled by Cys-74. Position 75–76 (75–76) interacts with substrate; that stretch reads NT. Cys-185 serves as the catalytic Proton donor/acceptor. 186–187 is a binding site for substrate; the sequence is TH.

Belongs to the aspartate/glutamate racemases family.

The enzyme catalyses L-glutamate = D-glutamate. It functions in the pathway cell wall biogenesis; peptidoglycan biosynthesis. Functionally, provides the (R)-glutamate required for cell wall biosynthesis. In Levilactobacillus brevis (strain ATCC 367 / BCRC 12310 / CIP 105137 / JCM 1170 / LMG 11437 / NCIMB 947 / NCTC 947) (Lactobacillus brevis), this protein is Glutamate racemase.